Reading from the N-terminus, the 193-residue chain is Large ribosomal subunit protein uL5 (193 aa).

It belongs to the universal ribosomal protein uL5 family. In terms of assembly, part of the 50S ribosomal subunit; part of the 5S rRNA/L5/L18/L25 subcomplex. Contacts the 5S rRNA and the P site tRNA. Forms a bridge to the 30S subunit in the 70S ribosome.

In terms of biological role, this is one of the proteins that bind and probably mediate the attachment of the 5S RNA into the large ribosomal subunit, where it forms part of the central protuberance. In the 70S ribosome it contacts protein S13 of the 30S subunit (bridge B1b), connecting the 2 subunits; this bridge is implicated in subunit movement. Contacts the P site tRNA; the 5S rRNA and some of its associated proteins might help stabilize positioning of ribosome-bound tRNAs. This Rhizorhabdus wittichii (strain DSM 6014 / CCUG 31198 / JCM 15750 / NBRC 105917 / EY 4224 / RW1) (Sphingomonas wittichii) protein is Large ribosomal subunit protein uL5.